Reading from the N-terminus, the 292-residue chain is MQGQIIKALAGFYYVESDGQVYQTRARGNFRKKGHTPYVGDWVDFSAEENSEGYILKIHERKNSLVRPPIVNIDQAVVIMSVKEPDFNSNLLDRFLVLLEHKGIHPIVYISKMDLLEDRGELDFYQQTYGDIGYDFVTSKEELLSLLTGKVTVFMGQTGVGKSTLLNKIAPDLNLETGEISDSLGRGRHTTRAVSFYNLNGGKIADTPGFSSLDYEVSRAEDLNQAFPEIATVSRDCKFRTCTHTHEPSCAVKPAVEEGVIATFRFDNYLQFLSEIENRRETYKKVSKKIPK.

The region spanning 62 to 213 (KNSLVRPPIV…IADTPGFSSL (152 aa)) is the CP-type G domain. GTP contacts are provided by residues 111–114 (SKMD) and 156–164 (GQTGVGKST). Zn(2+) is bound by residues C237, C242, H244, and C250.

The protein belongs to the TRAFAC class YlqF/YawG GTPase family. RsgA subfamily. In terms of assembly, monomer. Associates with 30S ribosomal subunit, binds 16S rRNA. Zn(2+) serves as cofactor.

It localises to the cytoplasm. Its function is as follows. One of several proteins that assist in the late maturation steps of the functional core of the 30S ribosomal subunit. Helps release RbfA from mature subunits. May play a role in the assembly of ribosomal proteins into the subunit. Circularly permuted GTPase that catalyzes slow GTP hydrolysis, GTPase activity is stimulated by the 30S ribosomal subunit. This chain is Small ribosomal subunit biogenesis GTPase RsgA, found in Streptococcus pneumoniae serotype 4 (strain ATCC BAA-334 / TIGR4).